We begin with the raw amino-acid sequence, 322 residues long: Sideroflexin-2 (322 aa).

Residue Met-1 is modified to N-acetylmethionine. Transmembrane regions (helical) follow at residues 100 to 122 (MIIT…WQWV), 142 to 164 (SVRQ…AVGM), 174 to 192 (LVGR…CVNI), 228 to 250 (VVIS…MERL), and 265 to 287 (PLQV…GLFP).

The protein belongs to the sideroflexin family. As to expression, widely expressed, highest levels in kidney, liver, and pancreas.

It is found in the mitochondrion inner membrane. The protein resides in the mitochondrion outer membrane. The catalysed reaction is L-serine(in) = L-serine(out). In terms of biological role, mitochondrial amino-acid transporter that mediates transport of serine into mitochondria. Involved in mitochondrial iron homeostasis by regulating heme biosynthesis. The chain is Sideroflexin-2 from Homo sapiens (Human).